Consider the following 757-residue polypeptide: Elongation factor G, mitochondrial (757 aa).

A tr-type G domain is found at 66 to 344 (DRMRNIGISA…VLDYLPCPME (279 aa)). GTP is bound by residues 75-82 (AHIDSGKT), 142-146 (DTPGH), and 196-199 (NKLD).

Belongs to the TRAFAC class translation factor GTPase superfamily. Classic translation factor GTPase family. EF-G/EF-2 subfamily.

Its subcellular location is the mitochondrion. The protein operates within protein biosynthesis; polypeptide chain elongation. Its function is as follows. Mitochondrial GTPase that catalyzes the GTP-dependent ribosomal translocation step during translation elongation. During this step, the ribosome changes from the pre-translocational (PRE) to the post-translocational (POST) state as the newly formed A-site-bound peptidyl-tRNA and P-site-bound deacylated tRNA move to the P and E sites, respectively. Catalyzes the coordinated movement of the two tRNA molecules, the mRNA and conformational changes in the ribosome. The sequence is that of Elongation factor G, mitochondrial from Oryza sativa subsp. japonica (Rice).